We begin with the raw amino-acid sequence, 240 residues long: Ribosomal RNA small subunit methyltransferase J (240 aa).

S-adenosyl-L-methionine-binding positions include 93 to 94 (RD) and Asp-162.

This sequence belongs to the methyltransferase superfamily. RsmJ family.

Its subcellular location is the cytoplasm. The catalysed reaction is guanosine(1516) in 16S rRNA + S-adenosyl-L-methionine = N(2)-methylguanosine(1516) in 16S rRNA + S-adenosyl-L-homocysteine + H(+). In terms of biological role, specifically methylates the guanosine in position 1516 of 16S rRNA. The chain is Ribosomal RNA small subunit methyltransferase J from Francisella philomiragia subsp. philomiragia (strain ATCC 25017 / CCUG 19701 / FSC 153 / O#319-036).